We begin with the raw amino-acid sequence, 258 residues long: Imidazole glycerol phosphate synthase subunit HisF (258 aa).

Active-site residues include Asp11 and Asp130.

It belongs to the HisA/HisF family. In terms of assembly, heterodimer of HisH and HisF.

The protein localises to the cytoplasm. The catalysed reaction is 5-[(5-phospho-1-deoxy-D-ribulos-1-ylimino)methylamino]-1-(5-phospho-beta-D-ribosyl)imidazole-4-carboxamide + L-glutamine = D-erythro-1-(imidazol-4-yl)glycerol 3-phosphate + 5-amino-1-(5-phospho-beta-D-ribosyl)imidazole-4-carboxamide + L-glutamate + H(+). It functions in the pathway amino-acid biosynthesis; L-histidine biosynthesis; L-histidine from 5-phospho-alpha-D-ribose 1-diphosphate: step 5/9. In terms of biological role, IGPS catalyzes the conversion of PRFAR and glutamine to IGP, AICAR and glutamate. The HisF subunit catalyzes the cyclization activity that produces IGP and AICAR from PRFAR using the ammonia provided by the HisH subunit. This chain is Imidazole glycerol phosphate synthase subunit HisF, found in Escherichia coli O1:K1 / APEC.